The following is a 333-amino-acid chain: Ketol-acid reductoisomerase (NADP(+)) (333 aa).

Residues 1–171 enclose the KARI N-terminal Rossmann domain; that stretch reads MSNDTQPTIA…GGARANIIKT (171 aa). Residues 14–17, arginine 37, threonine 42, and 72–75 contribute to the NADP(+) site; these read YGSQ and DMVQ. Histidine 97 is an active-site residue. Residue glycine 123 participates in NADP(+) binding. The region spanning 172–317 is the KARI C-terminal knotted domain; the sequence is TFKEETETDL…KKLRAKMVWL (146 aa). 4 residues coordinate Mg(2+): aspartate 180, glutamate 184, glutamate 216, and glutamate 220. Serine 241 provides a ligand contact to substrate.

This sequence belongs to the ketol-acid reductoisomerase family. The cofactor is Mg(2+).

The catalysed reaction is (2R)-2,3-dihydroxy-3-methylbutanoate + NADP(+) = (2S)-2-acetolactate + NADPH + H(+). It carries out the reaction (2R,3R)-2,3-dihydroxy-3-methylpentanoate + NADP(+) = (S)-2-ethyl-2-hydroxy-3-oxobutanoate + NADPH + H(+). It participates in amino-acid biosynthesis; L-isoleucine biosynthesis; L-isoleucine from 2-oxobutanoate: step 2/4. Its pathway is amino-acid biosynthesis; L-valine biosynthesis; L-valine from pyruvate: step 2/4. Functionally, involved in the biosynthesis of branched-chain amino acids (BCAA). Catalyzes an alkyl-migration followed by a ketol-acid reduction of (S)-2-acetolactate (S2AL) to yield (R)-2,3-dihydroxy-isovalerate. In the isomerase reaction, S2AL is rearranged via a Mg-dependent methyl migration to produce 3-hydroxy-3-methyl-2-ketobutyrate (HMKB). In the reductase reaction, this 2-ketoacid undergoes a metal-dependent reduction by NADPH to yield (R)-2,3-dihydroxy-isovalerate. This is Ketol-acid reductoisomerase (NADP(+)) from Xanthomonas campestris pv. campestris (strain 8004).